Reading from the N-terminus, the 62-residue chain is Large ribosomal subunit protein eL37 (62 aa).

Zn(2+) is bound by residues Cys20, Cys23, Cys35, and Cys38. A C4-type zinc finger spans residues 20–38; sequence CRRCGRRSYHVRKKACSAC.

This sequence belongs to the eukaryotic ribosomal protein eL37 family. Zn(2+) is required as a cofactor.

Binds to the 23S rRNA. In Methanococcus aeolicus (strain ATCC BAA-1280 / DSM 17508 / OCM 812 / Nankai-3), this protein is Large ribosomal subunit protein eL37.